Here is a 90-residue protein sequence, read N- to C-terminus: MISTIYRERTAADLKSRIDHVLLNGQKTEIVELAIDGATVTVLTKREEDIKHIETVQIFDELGNVITERKTDLDVSENRTLDFRFTFEVV.

This is an uncharacterized protein from Bacillus subtilis (strain 168).